The following is a 231-amino-acid chain: Ribonuclease 3 (231 aa).

The 129-residue stretch at 7–135 (IQAIESKLNF…ILGAVYLDGG (129 aa)) folds into the RNase III domain. Residue E48 participates in Mg(2+) binding. Residue D52 is part of the active site. Residues N121 and E124 each contribute to the Mg(2+) site. The active site involves E124. The region spanning 160–229 (NPKNRLQQFT…AKQALSTHDN (70 aa)) is the DRBM domain.

It belongs to the ribonuclease III family. In terms of assembly, homodimer. Mg(2+) is required as a cofactor.

The protein localises to the cytoplasm. The catalysed reaction is Endonucleolytic cleavage to 5'-phosphomonoester.. Digests double-stranded RNA. Involved in the processing of primary rRNA transcript to yield the immediate precursors to the large and small rRNAs (23S and 16S). Processes some mRNAs, and tRNAs when they are encoded in the rRNA operon. Processes pre-crRNA and tracrRNA of type II CRISPR loci if present in the organism. This Chlamydia trachomatis serovar L2 (strain ATCC VR-902B / DSM 19102 / 434/Bu) protein is Ribonuclease 3.